We begin with the raw amino-acid sequence, 305 residues long: Probable DNA-invertase y4cG (305 aa).

Positions 15–148 (RLIGYARVST…SGMQAAKARG (134 aa)) constitute a Resolvase/invertase-type recombinase catalytic domain. Ser-23 (O-(5'-phospho-DNA)-serine intermediate) is an active-site residue.

This sequence belongs to the site-specific recombinase resolvase family.

This Sinorhizobium fredii (strain NBRC 101917 / NGR234) protein is Probable DNA-invertase y4cG.